The primary structure comprises 85 residues: Probable Thioredoxin (85 aa).

The Glutaredoxin domain occupies 2-85 (VVKIEVFTSP…LFEAISDEIE (84 aa)). C13 and C16 are oxidised to a cystine.

Belongs to the glutaredoxin family.

It localises to the cytoplasm. Functionally, does not function as a glutathione-disulfide oxidoreductase in the presence of glutathione and glutathione reductase. May be a component of a ribonucleotide-reducing system distinct from the previously described systems utilizing thioredoxin or glutaredoxin. The protein is Probable Thioredoxin of Methanothermobacter marburgensis (strain ATCC BAA-927 / DSM 2133 / JCM 14651 / NBRC 100331 / OCM 82 / Marburg) (Methanobacterium thermoautotrophicum).